The following is an 825-amino-acid chain: Lon protease (825 aa).

The Lon N-terminal domain occupies 41 to 237 (LPIIFIPNTI…KVIQLLLEQK (197 aa)). 388–395 (GPPGTGKT) serves as a coordination point for ATP. Positions 625-805 (SNPPGVVTGL…DEVLYEALGL (181 aa)) constitute a Lon proteolytic domain. Active-site residues include S711 and K754.

It belongs to the peptidase S16 family. In terms of assembly, homohexamer. Organized in a ring with a central cavity.

It localises to the cytoplasm. The enzyme catalyses Hydrolysis of proteins in presence of ATP.. ATP-dependent serine protease that mediates the selective degradation of mutant and abnormal proteins as well as certain short-lived regulatory proteins. Required for cellular homeostasis and for survival from DNA damage and developmental changes induced by stress. Degrades polypeptides processively to yield small peptide fragments that are 5 to 10 amino acids long. Binds to DNA in a double-stranded, site-specific manner. The sequence is that of Lon protease from Methanosphaera stadtmanae (strain ATCC 43021 / DSM 3091 / JCM 11832 / MCB-3).